A 527-amino-acid polypeptide reads, in one-letter code: Glutamate--cysteine ligase (527 aa).

This sequence belongs to the glutamate--cysteine ligase type 1 family. Type 1 subfamily.

It catalyses the reaction L-cysteine + L-glutamate + ATP = gamma-L-glutamyl-L-cysteine + ADP + phosphate + H(+). It participates in sulfur metabolism; glutathione biosynthesis; glutathione from L-cysteine and L-glutamate: step 1/2. This chain is Glutamate--cysteine ligase, found in Bordetella bronchiseptica (strain ATCC BAA-588 / NCTC 13252 / RB50) (Alcaligenes bronchisepticus).